Reading from the N-terminus, the 308-residue chain is Ornithine carbamoyltransferase (308 aa).

Carbamoyl phosphate is bound by residues 56 to 59 (STRT), Gln-83, Arg-107, and 134 to 137 (HPCQ). L-ornithine contacts are provided by residues Asn-165, Asp-225, and 229-230 (SM). Carbamoyl phosphate contacts are provided by residues 266–267 (CL) and Arg-294.

The protein belongs to the aspartate/ornithine carbamoyltransferase superfamily. OTCase family.

It is found in the cytoplasm. It catalyses the reaction carbamoyl phosphate + L-ornithine = L-citrulline + phosphate + H(+). The protein operates within amino-acid degradation; L-arginine degradation via ADI pathway; carbamoyl phosphate from L-arginine: step 2/2. Its function is as follows. Reversibly catalyzes the transfer of the carbamoyl group from carbamoyl phosphate (CP) to the N(epsilon) atom of ornithine (ORN) to produce L-citrulline. This is Ornithine carbamoyltransferase from Cereibacter sphaeroides (strain KD131 / KCTC 12085) (Rhodobacter sphaeroides).